The sequence spans 168 residues: MRFAFTTVSLSLLLSSLVASDAASSDVQFLTALVGDYQDHKTDYIKFFATAKDVPGDLSTLATKVLTYTDDSYTTLLNDDSLNVSNLEAYATSLPWYSRIQADAGGKGSASGSASGSGSAKSTASAEKSSGSSASASSTAGGSSSKGGVSELVAPVGAVVGALAVALM.

The first 24 residues, 1–24 (MRFAFTTVSLSLLLSSLVASDAAS), serve as a signal peptide directing secretion. N-linked (GlcNAc...) asparagine glycosylation is present at Asn83. The disordered stretch occupies residues 111–149 (SGSASGSGSAKSTASAEKSSGSSASASSTAGGSSSKGGV). The GPI-anchor amidated serine moiety is linked to residue Ser143. Positions 144-168 (SSKGGVSELVAPVGAVVGALAVALM) are cleaved as a propeptide — removed in mature form.

Belongs to the SRP1/TIP1 family. The GPI-anchor is attached to the protein in the endoplasmic reticulum and serves to target the protein to the cell surface. There, the glucosamine-inositol phospholipid moiety is cleaved off and the GPI-modified mannoprotein is covalently attached via its lipidless GPI glycan remnant to the 1,6-beta-glucan of the outer cell wall layer.

The protein resides in the secreted. It is found in the cell wall. Its subcellular location is the membrane. Functionally, probable cell wall protein which may have esterase activity, with a preference for esters of fatty acids from 4 to 16 carbon atoms. The polypeptide is Repressed By RIM101 protein 2 (RBR2) (Candida albicans (strain SC5314 / ATCC MYA-2876) (Yeast)).